The chain runs to 382 residues: Elongation factor Tu (382 aa).

GTP is bound by residues 1–7 (HVDHGKT), 62–66 (DCPGH), and 117–120 (NKVD). The tr-type G domain occupies 1–190 (HVDHGKTTLT…AVDEYIPTPQ (190 aa)). A Mg(2+)-binding site is contributed by Thr-7.

Belongs to the TRAFAC class translation factor GTPase superfamily. Classic translation factor GTPase family. EF-Tu/EF-1A subfamily. In terms of assembly, monomer.

Its subcellular location is the cytoplasm. The enzyme catalyses GTP + H2O = GDP + phosphate + H(+). Functionally, GTP hydrolase that promotes the GTP-dependent binding of aminoacyl-tRNA to the A-site of ribosomes during protein biosynthesis. The polypeptide is Elongation factor Tu (Chloroflexus aurantiacus).